Reading from the N-terminus, the 130-residue chain is Large ribosomal subunit protein bL20 (130 aa).

It belongs to the bacterial ribosomal protein bL20 family.

Its function is as follows. Binds directly to 23S ribosomal RNA and is necessary for the in vitro assembly process of the 50S ribosomal subunit. It is not involved in the protein synthesizing functions of that subunit. The chain is Large ribosomal subunit protein bL20 from Nocardioides sp. (strain ATCC BAA-499 / JS614).